Here is a 617-residue protein sequence, read N- to C-terminus: Autophagy-related protein 20 (617 aa).

Positions 1–83 (MWNDEDNNPY…KRKPGGYDSR (83 aa)) are disordered. Over residues 20–31 (QSSSINPTSPST) the composition is skewed to low complexity. Residues 48–58 (DNEHNHGVIHD) show a composition bias toward basic and acidic residues. The span at 59–68 (DSDDDDEDLT) shows a compositional bias: acidic residues. The 121-residue stretch at 89–209 (YENPKLSILI…RFFDPNASWS (121 aa)) folds into the PX domain. The a 1,2-diacyl-sn-glycero-3-phospho-(1D-myo-inositol-3-phosphate) site is built by Arg-126, Ser-128, Lys-152, and Arg-175. Residues 403 to 440 (QQDLTTEELSKKRALLDQLEQSEAEARRIENYLSSSQQ) are a coiled coil. Positions 434 to 516 (YLSSSQQISP…SGNSITNKIF (83 aa)) are disordered. The segment covering 454–463 (PPSHQRRDGS) has biased composition (basic and acidic residues). Residues 480 to 500 (DFSSHTPSASQGLPERSTSVP) are compositionally biased toward polar residues.

The protein belongs to the sorting nexin family. In terms of assembly, forms a complex with SNX4/ATG24 and ATG17.

The protein localises to the endosome membrane. It localises to the preautophagosomal structure membrane. In terms of biological role, required for cytoplasm to vacuole transport (Cvt), pexophagy and mitophagy. Also involved in endoplasmic reticulum-specific autophagic process and is essential for the survival of cells subjected to severe ER stress. Functions in protein retrieval from the endocytic pathway. Required for proper sorting of the v-SNARE protein SNC1. Autophagy is required for proper vegetative growth, asexual/sexual reproduction, and full virulence. Autophagy is particularly involved in the biosynthesis of deoxynivalenol (DON), an important virulence determinant. This chain is Autophagy-related protein 20, found in Gibberella zeae (strain ATCC MYA-4620 / CBS 123657 / FGSC 9075 / NRRL 31084 / PH-1) (Wheat head blight fungus).